The following is a 605-amino-acid chain: Replication and transcription activator (605 aa).

Disordered regions lie at residues 307–381 (SLPS…EPEQ) and 447–509 (RIRP…EDPD). A compositionally biased stretch (low complexity) spans 321–338 (SADCGDSSSSSSDSGNSD). The segment covering 341-353 (QSEREEARAEAPR) has biased composition (basic and acidic residues). Over residues 355 to 364 (RAPKSRRTSR) the composition is skewed to basic residues.

The protein belongs to the herpesviridae Rta family. Interacts with human ATF7IP protein, leading to promote and regulate host genes in virus-infected cells. Interacts with RNA polymerase III complex; this interaction downregulates small RNA transcription and 5'-pppRNA production.

It is found in the host nucleus. The protein resides in the virion tegument. Its function is as follows. Immediate-early transcription factor that controls the initiation of viral lytic gene expression and lytic reactivation from latency. Triggers lytic replication, and initiates a cellular senescence program in epithelial cells. Up-regulates human DCR3/TNFRSF6B by directly binding to its receptor. Globally induces a proteasome-dependent loss of SUMOylated proteins in the host cell and the loss of promeylocytic leukemia nuclear bodies. Improves the stability of the triplex capsid protein TRX1 by reducing the ubiquitination level of the latter. Mediates evasion of inflammasome activation and antiviral responses (T- and NK cell activation) during EBV early lytic infection. The polypeptide is Replication and transcription activator (Epstein-Barr virus (strain AG876) (HHV-4)).